The sequence spans 187 residues: Elongation factor P (187 aa).

It belongs to the elongation factor P family.

The protein resides in the cytoplasm. The protein operates within protein biosynthesis; polypeptide chain elongation. In terms of biological role, involved in peptide bond synthesis. Stimulates efficient translation and peptide-bond synthesis on native or reconstituted 70S ribosomes in vitro. Probably functions indirectly by altering the affinity of the ribosome for aminoacyl-tRNA, thus increasing their reactivity as acceptors for peptidyl transferase. The polypeptide is Elongation factor P (Mycobacteroides abscessus (strain ATCC 19977 / DSM 44196 / CCUG 20993 / CIP 104536 / JCM 13569 / NCTC 13031 / TMC 1543 / L948) (Mycobacterium abscessus)).